The primary structure comprises 211 residues: Ribonuclease HII (211 aa).

Residues 17–211 form the RNase H type-2 domain; sequence FLSAGVDEVG…CQPSLFEVRS (195 aa). D23, E24, and D119 together coordinate a divalent metal cation.

The protein belongs to the RNase HII family. Mn(2+) serves as cofactor. Mg(2+) is required as a cofactor.

It is found in the cytoplasm. It catalyses the reaction Endonucleolytic cleavage to 5'-phosphomonoester.. Endonuclease that specifically degrades the RNA of RNA-DNA hybrids. In Trichodesmium erythraeum (strain IMS101), this protein is Ribonuclease HII.